The primary structure comprises 223 residues: 3,4-dihydroxy-2-butanone 4-phosphate synthase (223 aa).

D-ribulose 5-phosphate is bound by residues 39–40 (RE), Asp44, 152–156 (RRGHT), and Glu176. Mg(2+) is bound at residue Glu40. His155 is a Mg(2+) binding site.

The protein belongs to the DHBP synthase family. As to quaternary structure, homodimer. Requires Mg(2+) as cofactor. Mn(2+) serves as cofactor.

It catalyses the reaction D-ribulose 5-phosphate = (2S)-2-hydroxy-3-oxobutyl phosphate + formate + H(+). It functions in the pathway cofactor biosynthesis; riboflavin biosynthesis; 2-hydroxy-3-oxobutyl phosphate from D-ribulose 5-phosphate: step 1/1. Functionally, catalyzes the conversion of D-ribulose 5-phosphate to formate and 3,4-dihydroxy-2-butanone 4-phosphate. The sequence is that of 3,4-dihydroxy-2-butanone 4-phosphate synthase from Desulfovibrio desulfuricans (strain ATCC 27774 / DSM 6949 / MB).